Consider the following 86-residue polypeptide: MAVVLRLARAGVKKKPYYHVVATDSRNPRDGKFIEAVGAYDPNQEPPKVEFNEERLNYWLKTGATPSETVADLIKVAGKAKPAPAV.

The protein belongs to the bacterial ribosomal protein bS16 family.

The sequence is that of Small ribosomal subunit protein bS16 from Myxococcus xanthus (strain DK1622).